A 366-amino-acid polypeptide reads, in one-letter code: tRNA(Met) cytidine acetate ligase (366 aa).

ATP is bound by residues 7 to 20 (IAEFNPFHNGHKYL), G96, N152, and R175.

The protein belongs to the TmcAL family.

Its subcellular location is the cytoplasm. It catalyses the reaction cytidine(34) in elongator tRNA(Met) + acetate + ATP = N(4)-acetylcytidine(34) in elongator tRNA(Met) + AMP + diphosphate. Its function is as follows. Catalyzes the formation of N(4)-acetylcytidine (ac(4)C) at the wobble position of elongator tRNA(Met), using acetate and ATP as substrates. First activates an acetate ion to form acetyladenylate (Ac-AMP) and then transfers the acetyl group to tRNA to form ac(4)C34. The polypeptide is tRNA(Met) cytidine acetate ligase (Streptococcus mutans serotype c (strain ATCC 700610 / UA159)).